The primary structure comprises 131 residues: MAGVKALVALSFSGAIGLTFLMLGCALEDYGVYWPLFVLIFYVISPIPYFIAKRVTYDSDATSSACRELAYFFTTGIVVSAFGLPVVLARVDVIKWGACGLVLAGNAVIFLTIQGFFLVFGRGDDFSWEQW.

The next 4 helical transmembrane spans lie at 7-27 (LVAL…GCAL), 32-52 (VYWP…YFIA), 69-89 (LAYF…VVLA), and 100-120 (GLVL…FLVF).

Belongs to the OB-RGRP/VPS55 family. As to quaternary structure, interacts with LEPR. Interacts with RAB13. As to expression, widely distributed in the brain, with elevated expression in the hypothalamic regions, including the paraventricular nucleus. In the placenta, present at high levels in the junctional zone situated towards the maternal aspect and throughout the labyrinth zone in close proximity to the developing fetus.

It is found in the golgi apparatus membrane. Its subcellular location is the endosome membrane. In terms of biological role, negatively regulates leptin receptor (LEPR) cell surface expression, and thus decreases response to leptin. Negatively regulates growth hormone (GH) receptor cell surface expression in liver. May play a role in liver resistance to GH during periods of reduced nutrient availability. This chain is Leptin receptor gene-related protein (Leprot), found in Mus musculus (Mouse).